A 217-amino-acid chain; its full sequence is Large ribosomal subunit protein uL3 (217 aa).

A disordered region spans residues 129-161 (SRGPMSHGSKNHRAPGSTGAGTTPGRIYPGKRM). Residues 142–153 (APGSTGAGTTPG) are compositionally biased toward low complexity.

This sequence belongs to the universal ribosomal protein uL3 family. In terms of assembly, part of the 50S ribosomal subunit. Forms a cluster with proteins L14 and L19.

One of the primary rRNA binding proteins, it binds directly near the 3'-end of the 23S rRNA, where it nucleates assembly of the 50S subunit. In Prochlorococcus marinus (strain MIT 9515), this protein is Large ribosomal subunit protein uL3.